The sequence spans 104 residues: Large ribosomal subunit protein bL21 (104 aa).

It belongs to the bacterial ribosomal protein bL21 family. As to quaternary structure, part of the 50S ribosomal subunit. Contacts protein L20.

This protein binds to 23S rRNA in the presence of protein L20. The chain is Large ribosomal subunit protein bL21 from Pseudomonas putida (strain GB-1).